Reading from the N-terminus, the 158-residue chain is MSEEQGAATDGVILDYDVRKVMAALPHRYPLLLVDRVASLTLNERIHAVKAVSMNEQFFQGHFPGRPIMPGVLQIEALAQAAGVLAVESLGLAGSGKLVYFMAIEDAKFRNPVEPGVLLDLHVEFTQKRSRVCKFSGKAMIGDKVTCEVNFTAMIADS.

The active site involves histidine 62.

It belongs to the thioester dehydratase family. FabZ subfamily.

The protein resides in the cytoplasm. It catalyses the reaction a (3R)-hydroxyacyl-[ACP] = a (2E)-enoyl-[ACP] + H2O. In terms of biological role, involved in unsaturated fatty acids biosynthesis. Catalyzes the dehydration of short chain beta-hydroxyacyl-ACPs and long chain saturated and unsaturated beta-hydroxyacyl-ACPs. In Novosphingobium aromaticivorans (strain ATCC 700278 / DSM 12444 / CCUG 56034 / CIP 105152 / NBRC 16084 / F199), this protein is 3-hydroxyacyl-[acyl-carrier-protein] dehydratase FabZ.